A 117-amino-acid polypeptide reads, in one-letter code: Ig heavy chain V region J558 (117 aa).

The region spanning 1 to 116 (EVQLQQSGPE…WGAGTTVTVS (116 aa)) is the Ig-like domain. A disulfide bridge links C22 with C96.

This is Ig heavy chain V region J558 from Mus musculus (Mouse).